We begin with the raw amino-acid sequence, 280 residues long: MSNNKQAWTGQLDLSVFNNGKKSVARDVFFEKALKVMRPVYLNQSDIPTFYIVNVGGGYLDGDRYTMNFNIDSDAKVILTSQGATKIYKTLNDHVEQYQTFNIKNNGYAEYVGDPIIAFENAKFYQHNVFNLESTASLFYTDILTPGYSKSDKRFSYTYMHLLNEIYVDDALVTFDNMLLDPQKQNVDGLGYMEDYTHLGSCYFIHPSVNQKFIEQVYEEIKHFQHKYDCRFGITHLPTHGFSLRILSNKTQVIESIITAVQCYVVKQIFDRDVDFLRKY.

The protein belongs to the UreD family. In terms of assembly, ureD, UreF and UreG form a complex that acts as a GTP-hydrolysis-dependent molecular chaperone, activating the urease apoprotein by helping to assemble the nickel containing metallocenter of UreC. The UreE protein probably delivers the nickel.

It localises to the cytoplasm. In terms of biological role, required for maturation of urease via the functional incorporation of the urease nickel metallocenter. This Staphylococcus saprophyticus subsp. saprophyticus (strain ATCC 15305 / DSM 20229 / NCIMB 8711 / NCTC 7292 / S-41) protein is Urease accessory protein UreD.